Here is a 732-residue protein sequence, read N- to C-terminus: Elongation factor 2 (732 aa).

Residues 19–260 (ERIRNIGIAA…MVVRHLPSPI (242 aa)) form the tr-type G domain. GTP-binding positions include 28–35 (AHIDHGKT), 94–98 (DTPGH), and 148–151 (NKVD). Diphthamide is present on His597.

Belongs to the TRAFAC class translation factor GTPase superfamily. Classic translation factor GTPase family. EF-G/EF-2 subfamily.

It localises to the cytoplasm. Catalyzes the GTP-dependent ribosomal translocation step during translation elongation. During this step, the ribosome changes from the pre-translocational (PRE) to the post-translocational (POST) state as the newly formed A-site-bound peptidyl-tRNA and P-site-bound deacylated tRNA move to the P and E sites, respectively. Catalyzes the coordinated movement of the two tRNA molecules, the mRNA and conformational changes in the ribosome. The chain is Elongation factor 2 (fusA) from Pyrococcus furiosus (strain ATCC 43587 / DSM 3638 / JCM 8422 / Vc1).